The following is an 848-amino-acid chain: Adenylate cyclase (848 aa).

A catalytic region spans residues 1–535; it reads MYLYIETLKQ…DVSHHFPLRL (535 aa). The segment at 541–848 is regulatory; that stretch reads KALYSPCEIR…DAPLLQQYFS (308 aa). Phosphohistidine; by CRR is present on His-609.

It belongs to the adenylyl cyclase class-1 family.

The protein resides in the cytoplasm. The enzyme catalyses ATP = 3',5'-cyclic AMP + diphosphate. The protein is Adenylate cyclase (cyaA) of Salmonella typhi.